Reading from the N-terminus, the 116-residue chain is Protein Wnt-5a (116 aa).

Residue serine 1 is the site of O-palmitoleoyl serine; by PORCN attachment. Asparagine 69 and asparagine 83 each carry an N-linked (GlcNAc...) asparagine glycan. Cysteine 82 and cysteine 97 are disulfide-bonded.

It belongs to the Wnt family. Palmitoleoylation is required for efficient binding to frizzled receptors. Depalmitoleoylation leads to Wnt signaling pathway inhibition.

It is found in the secreted. The protein localises to the extracellular space. Its subcellular location is the extracellular matrix. In terms of biological role, ligand for members of the frizzled family of seven transmembrane receptors. Can activate or inhibit canonical Wnt signaling, depending on receptor context. Required during embryogenesis for extension of the primary anterior-posterior axis. This chain is Protein Wnt-5a (WNT5A), found in Meleagris gallopavo (Wild turkey).